A 292-amino-acid polypeptide reads, in one-letter code: 33 kDa chaperonin (292 aa).

Cystine bridges form between Cys-230–Cys-232 and Cys-263–Cys-266.

The protein belongs to the HSP33 family. Post-translationally, under oxidizing conditions two disulfide bonds are formed involving the reactive cysteines. Under reducing conditions zinc is bound to the reactive cysteines and the protein is inactive.

The protein resides in the cytoplasm. In terms of biological role, redox regulated molecular chaperone. Protects both thermally unfolding and oxidatively damaged proteins from irreversible aggregation. Plays an important role in the bacterial defense system toward oxidative stress. This Salmonella typhi protein is 33 kDa chaperonin.